A 109-amino-acid chain; its full sequence is Aquaporin-2 (109 aa).

The Cytoplasmic portion of the chain corresponds to 1 to 6 (SIAFSR). A helical transmembrane segment spans residues 7 to 27 (AVFSEFLATLLFVFFGLGSAL). Residues 28-35 (NWPQALPS) are Extracellular-facing. The chain crosses the membrane as a helical span at residues 36 to 54 (VLQIAMAFGLAIGTLVQTL). Topologically, residues 55-59 (GHISG) are cytoplasmic. Positions 60-69 (AHINPAVTVA) form an intramembrane region, discontinuously helical. The NPA 1 motif lies at 63-65 (NPA). Topologically, residues 70 to 80 (CLVGCHVSFLR) are cytoplasmic. A helical transmembrane segment spans residues 81 to 102 (ATFYLAAQLLGAVAGAALLHEL). The Extracellular portion of the chain corresponds to 103-109 (TPPDIRG).

It belongs to the MIP/aquaporin (TC 1.A.8) family. Homotetramer. Serine phosphorylation is necessary and sufficient for expression at the apical membrane. Endocytosis is not phosphorylation-dependent. In terms of processing, N-glycosylated.

It is found in the apical cell membrane. The protein resides in the basolateral cell membrane. It localises to the cell membrane. The protein localises to the cytoplasmic vesicle membrane. Its subcellular location is the golgi apparatus. It is found in the trans-Golgi network membrane. It carries out the reaction H2O(in) = H2O(out). It catalyses the reaction glycerol(in) = glycerol(out). In terms of biological role, forms a water-specific channel that provides the plasma membranes of renal collecting duct with high permeability to water, thereby permitting water to move in the direction of an osmotic gradient. Plays an essential role in renal water homeostasis. Could also be permeable to glycerol. The chain is Aquaporin-2 from Elephas maximus (Indian elephant).